The following is a 441-amino-acid chain: 3-phosphoshikimate 1-carboxyvinyltransferase (441 aa).

Residues Lys-22, Ser-23, and Arg-27 each coordinate 3-phosphoshikimate. A phosphoenolpyruvate-binding site is contributed by Lys-22. The phosphoenolpyruvate site is built by Gly-95 and Arg-123. The 3-phosphoshikimate site is built by Ser-168, Gln-170, Asp-321, and Lys-348. Gln-170 is a binding site for phosphoenolpyruvate. Catalysis depends on Asp-321, which acts as the Proton acceptor. Residues Arg-352 and Arg-400 each contribute to the phosphoenolpyruvate site.

It belongs to the EPSP synthase family. In terms of assembly, monomer.

Its subcellular location is the cytoplasm. It catalyses the reaction 3-phosphoshikimate + phosphoenolpyruvate = 5-O-(1-carboxyvinyl)-3-phosphoshikimate + phosphate. Its pathway is metabolic intermediate biosynthesis; chorismate biosynthesis; chorismate from D-erythrose 4-phosphate and phosphoenolpyruvate: step 6/7. Functionally, catalyzes the transfer of the enolpyruvyl moiety of phosphoenolpyruvate (PEP) to the 5-hydroxyl of shikimate-3-phosphate (S3P) to produce enolpyruvyl shikimate-3-phosphate and inorganic phosphate. The sequence is that of 3-phosphoshikimate 1-carboxyvinyltransferase from Novosphingobium aromaticivorans (strain ATCC 700278 / DSM 12444 / CCUG 56034 / CIP 105152 / NBRC 16084 / F199).